The chain runs to 110 residues: NADH-quinone oxidoreductase subunit K (110 aa).

Transmembrane regions (helical) follow at residues 7–27 (LGSYLLVGAMLFCLGLYGVFV), 31–51 (IIAILMSIELMLNAVNINFIA), and 73–93 (IFVIVVAAAEIAVGLALVIAI).

It belongs to the complex I subunit 4L family. NDH-1 is composed of 14 different subunits. Subunits NuoA, H, J, K, L, M, N constitute the membrane sector of the complex.

The protein resides in the cell membrane. The enzyme catalyses a quinone + NADH + 5 H(+)(in) = a quinol + NAD(+) + 4 H(+)(out). NDH-1 shuttles electrons from NADH, via FMN and iron-sulfur (Fe-S) centers, to quinones in the respiratory chain. The immediate electron acceptor for the enzyme in this species is believed to be a menaquinone. Couples the redox reaction to proton translocation (for every two electrons transferred, four hydrogen ions are translocated across the cytoplasmic membrane), and thus conserves the redox energy in a proton gradient. In Desulfitobacterium hafniense (strain DSM 10664 / DCB-2), this protein is NADH-quinone oxidoreductase subunit K.